Reading from the N-terminus, the 863-residue chain is ATP-dependent helicase Lhr-Core protein 2 (863 aa).

The ATP site is built by Phe30, Gln37, Lys60, Thr61, Asp179, Glu180, Arg377, and His380. A Helicase ATP-binding domain is found at 41–234 (VIEIHKGENV…FVFGFNDDGT (194 aa)). Positions 179-182 (DEVH) match the DEAH box motif. The 150-residue stretch at 275–424 (RLDELIEQHR…RIKIPQNPLD (150 aa)) folds into the Helicase C-terminal domain. A WH domain region spans residues 418 to 512 (IPQNPLDVLV…AIYYMNTGTI (95 aa)). Positions 513 to 863 (PDEAKIEVYT…KIMAMIGELE (351 aa)) are domain 4.

Belongs to the Lhr helicase family. Lhr-Core subfamily. Monomer.

The enzyme catalyses ATP + H2O = ADP + phosphate + H(+). Its activity is regulated as follows. Unwinding of dsRNA duplexes is inhibited by AMP-PMP and ATP-gamma-S. Its function is as follows. A DNA:RNA helicase with a significant strand annealing activity, probably involved in DNA repair and RNA transactions. In vitro has a slow helicase activity with a preference for 3'-overhang duplexes; displaces RNA from 3'-overhang DNA:RNA or RNA:RNA duplexes. 3'-tailed double-stranded (ds)DNA is not unwound. The slow helicase activity on RNA duplexes is ATP-independent. Has strand annealing properties in the absence of ATP; forms 3'-overhang DNA:RNA, 3'-overhang dsRNA and 3'-overhang dsDNA duplexes but not 5'-overhang duplexes. A nucleic acid-dependent ATPase; single-stranded (ss)DNA and RNA are equally stimulatory. Binds ssDNA, RNA, dsDNA and dsRNA duplexes. The chain is ATP-dependent helicase Lhr-Core protein 2 from Thermococcus barophilus (strain DSM 11836 / MP).